Here is a 158-residue protein sequence, read N- to C-terminus: MSTFTHINCQGEANMVDVSGKQESVREARAEALVTMSPETLNMIISGQHHKGDVFATARIAGIQAAKRTWDLIPLCHPLLLSKVEVSLTPVVERNQVRIESLCRLTGKTGVEMEALTAASVAALTIYDMCKAVQKDIVIEQVRLLEKCGGKSGHFIAK.

Substrate is bound by residues 75–77 and 113–114; these read LCH and ME. D128 is an active-site residue.

This sequence belongs to the MoaC family. As to quaternary structure, homohexamer; trimer of dimers.

It catalyses the reaction (8S)-3',8-cyclo-7,8-dihydroguanosine 5'-triphosphate = cyclic pyranopterin phosphate + diphosphate. Its pathway is cofactor biosynthesis; molybdopterin biosynthesis. Functionally, catalyzes the conversion of (8S)-3',8-cyclo-7,8-dihydroguanosine 5'-triphosphate to cyclic pyranopterin monophosphate (cPMP). The chain is Cyclic pyranopterin monophosphate synthase from Pasteurella multocida (strain Pm70).